The sequence spans 175 residues: Peptide deformylase (175 aa).

Residues Cys-96 and His-138 each coordinate Fe cation. Glu-139 is a catalytic residue. His-142 is a binding site for Fe cation.

It belongs to the polypeptide deformylase family. Fe(2+) serves as cofactor.

It catalyses the reaction N-terminal N-formyl-L-methionyl-[peptide] + H2O = N-terminal L-methionyl-[peptide] + formate. Its function is as follows. Removes the formyl group from the N-terminal Met of newly synthesized proteins. Requires at least a dipeptide for an efficient rate of reaction. N-terminal L-methionine is a prerequisite for activity but the enzyme has broad specificity at other positions. The chain is Peptide deformylase from Campylobacter jejuni subsp. jejuni serotype O:2 (strain ATCC 700819 / NCTC 11168).